Consider the following 498-residue polypeptide: Glycerol kinase (498 aa).

An ADP-binding site is contributed by Thr12. ATP contacts are provided by Thr12, Thr13, and Ser14. Position 12 (Thr12) interacts with sn-glycerol 3-phosphate. An ADP-binding site is contributed by Arg16. 4 residues coordinate sn-glycerol 3-phosphate: Arg82, Glu83, Tyr134, and Asp241. Arg82, Glu83, Tyr134, Asp241, and Gln242 together coordinate glycerol. ADP contacts are provided by Thr263 and Gly310. Thr263, Gly310, Gln314, and Gly411 together coordinate ATP. Residues Gly411 and Asn415 each contribute to the ADP site.

Belongs to the FGGY kinase family.

It catalyses the reaction glycerol + ATP = sn-glycerol 3-phosphate + ADP + H(+). The protein operates within polyol metabolism; glycerol degradation via glycerol kinase pathway; sn-glycerol 3-phosphate from glycerol: step 1/1. Inhibited by fructose 1,6-bisphosphate (FBP). Key enzyme in the regulation of glycerol uptake and metabolism. Catalyzes the phosphorylation of glycerol to yield sn-glycerol 3-phosphate. This Herminiimonas arsenicoxydans protein is Glycerol kinase.